The chain runs to 634 residues: Pentatricopeptide repeat-containing protein At5g14080 (634 aa).

PPR repeat units lie at residues 81 to 115, 116 to 150, 151 to 185, 186 to 220, 222 to 256, 257 to 291, 292 to 326, 327 to 360, 361 to 395, 396 to 430, 431 to 465, 466 to 500, and 501 to 535; these read DSISYHSIFKSLSLSRQFSAMDALFKQVKSNKILL, DSSVYRSLIDTLVLGRKAQSAFWVLEEAFSTGQEI, HPDVCNRLLAGLTSDGCYDYAQKLFVKMRHKGVSL, NTLGFGVYIGWFCRSSETNQLLRLVDEVKKANLNI, GSIIALLILHSLCKCSREMDAFYILEELRNIDCKP, DFMAYRVIAEAFVVTGNLYERQVVLKKKRKLGVAP, RSSDYRAFILDLISAKRLTEAKEVAEVIVSGKFPM, DNDILDALIGSVSAVDPDSAVEFLVYMVSTGKLP, AIRTLSKLSKNLCRHDKSDHLIKAYELLSSKGYFS, ELQSYSLMISFLCKAGRVRESYTALQEMKKEGLAP, DVSLYNALIEACCKAEMIRPAKKLWDEMFVEGCKM, NLTTYNVLIRKLSEEGEAEESLRLFDKMLERGIEP, and DETIYMSLIEGLCKETKIEAAMEVFRKCMERDHKT.

It belongs to the PPR family. P subfamily.

In Arabidopsis thaliana (Mouse-ear cress), this protein is Pentatricopeptide repeat-containing protein At5g14080.